The primary structure comprises 285 residues: MIICRTPEEISVQVRRWKAEDKKVGFVPTMGYLHEGHASLFRECLSKADKTVVSIFVNPAQFNDPEDYAKYPINTDGDLKICESGKVDLVFLPEKETIYPEGIPNVVLQVPHLMRNLCAVSRPGHFEGVLLVISRLFHFVKPDFAFFGKKDYQQYLLVKEFCKILAFPVEVIGCETIRSDKGLALSSRNSRLSEDEKEESLLISRALKLGEAQILSGIKDPVVVRDIMKDVLDSSPKIRLDYLEVLNADTLESLEILEGNILLAAAVFIGSVRLIDNRTLRVASV.

Residue 30-37 (MGYLHEGH) participates in ATP binding. The active-site Proton donor is His37. Residue Gln61 coordinates (R)-pantoate. Gln61 provides a ligand contact to beta-alanine. 148–151 (GKKD) contacts ATP. (R)-pantoate is bound at residue Gln154. Residues Ile177 and 185–188 (LSSR) contribute to the ATP site.

It belongs to the pantothenate synthetase family. As to quaternary structure, homodimer.

It is found in the cytoplasm. The catalysed reaction is (R)-pantoate + beta-alanine + ATP = (R)-pantothenate + AMP + diphosphate + H(+). Its pathway is cofactor biosynthesis; (R)-pantothenate biosynthesis; (R)-pantothenate from (R)-pantoate and beta-alanine: step 1/1. Catalyzes the condensation of pantoate with beta-alanine in an ATP-dependent reaction via a pantoyl-adenylate intermediate. The polypeptide is Pantothenate synthetase (Leptospira borgpetersenii serovar Hardjo-bovis (strain JB197)).